The primary structure comprises 91 residues: uncharacterized protein (91 aa).

This is an uncharacterized protein from Saccharolobus islandicus (Sulfolobus islandicus).